Here is a 203-residue protein sequence, read N- to C-terminus: Small ribosomal subunit protein uS4 (203 aa).

The S4 RNA-binding domain occupies 93 to 173 (RRFDNVVFRA…IPSWIQVDKA (81 aa)).

This sequence belongs to the universal ribosomal protein uS4 family. As to quaternary structure, part of the 30S ribosomal subunit. Contacts protein S5. The interaction surface between S4 and S5 is involved in control of translational fidelity.

Its function is as follows. One of the primary rRNA binding proteins, it binds directly to 16S rRNA where it nucleates assembly of the body of the 30S subunit. With S5 and S12 plays an important role in translational accuracy. The chain is Small ribosomal subunit protein uS4 from Pelodictyon phaeoclathratiforme (strain DSM 5477 / BU-1).